Consider the following 417-residue polypeptide: Gamma-glutamyl phosphate reductase (417 aa).

It belongs to the gamma-glutamyl phosphate reductase family.

The protein resides in the cytoplasm. The catalysed reaction is L-glutamate 5-semialdehyde + phosphate + NADP(+) = L-glutamyl 5-phosphate + NADPH + H(+). It functions in the pathway amino-acid biosynthesis; L-proline biosynthesis; L-glutamate 5-semialdehyde from L-glutamate: step 2/2. In terms of biological role, catalyzes the NADPH-dependent reduction of L-glutamate 5-phosphate into L-glutamate 5-semialdehyde and phosphate. The product spontaneously undergoes cyclization to form 1-pyrroline-5-carboxylate. The polypeptide is Gamma-glutamyl phosphate reductase (Photorhabdus laumondii subsp. laumondii (strain DSM 15139 / CIP 105565 / TT01) (Photorhabdus luminescens subsp. laumondii)).